Consider the following 226-residue polypeptide: Small ribosomal subunit protein uS5 (226 aa).

A disordered region spans residues 1 to 71 (MEDIKHNKKP…RKNEKRTKSE (71 aa)). Low complexity predominate over residues 24-54 (ANPQANHANPNNRSASVNNNSVNNNKKNSSR). The 64-residue stretch at 72 to 135 (FEEKIVKISR…KMAENNVQKI (64 aa)) folds into the S5 DRBM domain.

This sequence belongs to the universal ribosomal protein uS5 family. In terms of assembly, part of the 30S ribosomal subunit. Contacts proteins S4 and S8.

In terms of biological role, with S4 and S12 plays an important role in translational accuracy. Located at the back of the 30S subunit body where it stabilizes the conformation of the head with respect to the body. The sequence is that of Small ribosomal subunit protein uS5 from Mycoplasmoides gallisepticum (strain R(low / passage 15 / clone 2)) (Mycoplasma gallisepticum).